The primary structure comprises 347 residues: Eukaryotic translation initiation factor 3 subunit I (347 aa).

WD repeat units lie at residues 8–49, 50–89, 146–186, 198–237, 239–278, and 295–336; these read GHER…GTYE, GHNG…CLFT, TFSG…PESG, AHTD…VIKT, ATET…GRFE, and GHFG…SKLY.

This sequence belongs to the eIF-3 subunit I family. Component of the eukaryotic translation initiation factor 3 (eIF-3) complex.

It localises to the cytoplasm. In terms of biological role, component of the eukaryotic translation initiation factor 3 (eIF-3) complex, which is involved in protein synthesis of a specialized repertoire of mRNAs and, together with other initiation factors, stimulates binding of mRNA and methionyl-tRNAi to the 40S ribosome. The eIF-3 complex specifically targets and initiates translation of a subset of mRNAs involved in cell proliferation. In Mycosarcoma maydis (Corn smut fungus), this protein is Eukaryotic translation initiation factor 3 subunit I.